We begin with the raw amino-acid sequence, 605 residues long: MRIDQSIINEIKDKTDILDLVSEYVKLEKRGRNYIGLCPFHDEKTPSFTVSEDKQICHCFGCKKGGNVFQFTQEIKDISFVEAVKELGDRVNVAVDIEATQSNSNVQIASDDLQMIEMHELIQEFYYYALTKTVEGEQALTYLQERGFTDALIKERGIGFAPDSSHFCHDFLQKKGYDIELAYEAGLLSRNEENFSYYDRFRNRIMFPLKNAQGRIVGYSGRTYTGQEPKYLNSPETPIFQKRKLLYNLDKARKSIRKLDEIVLLEGFMDVIKSDTAGLKNVVATMGTQLSDEHITFIRKLTSNITLMFDGDFAGSEATLKTGQHLLQQGLNVFVIQLPSGMDPDEYIGKYGNDAFTTFVKNDKKSFAHYKVSILKDEIAHNDLSYERYLKELSHDISLMKSSILQQKAINDVAPFFNVSPEQLANEIQFNQAPANYYPEDEYGGYDEYGGYIEPEPIGMAQFDNLSRREKAERAFLKHLMRDKDTFLNYYESVDKDNFTNQHFKYVFEVLHDFYAENDQYNISDAVQYVNSNELRETLISLEQYNLNGEPYENEIDDYVNVINEKGQETIESLNHKLREATRIGDVELQKYYLQQIVAKNKERM.

A CHC2-type zinc finger spans residues 38 to 62; it reads CPFHDEKTPSFTVSEDKQICHCFGC. One can recognise a Toprim domain in the interval 260-341; sequence DEIVLLEGFM…NVFVIQLPSG (82 aa). 3 residues coordinate Mg(2+): E266, D310, and D312.

The protein belongs to the DnaG primase family. In terms of assembly, monomer. Interacts with DnaB. It depends on Zn(2+) as a cofactor. Requires Mg(2+) as cofactor.

It catalyses the reaction ssDNA + n NTP = ssDNA/pppN(pN)n-1 hybrid + (n-1) diphosphate.. In terms of biological role, RNA polymerase that catalyzes the synthesis of short RNA molecules used as primers for DNA polymerase during DNA replication. The sequence is that of DNA primase from Staphylococcus aureus.